The following is a 249-amino-acid chain: Uroplakin-3b-like protein 1 (249 aa).

An N-terminal signal peptide occupies residues 1-26; sequence MGPHGKQSVLRMPLLLLLTCVQSGTG. At 27–194 the chain is on the extracellular side; it reads LESINYAPQL…PGSQGKGTVV (168 aa). 3 N-linked (GlcNAc...) asparagine glycosylation sites follow: Asn63, Asn82, and Asn133. A helical transmembrane segment spans residues 195-215; the sequence is IIAFLSILLAILLVVFLVLVI. Residues 216 to 249 lie on the Cytoplasmic side of the membrane; it reads SACLSTSGSSPEEQVRMRHYHTHHMGSLRAERSS.

The protein belongs to the uroplakin-3 family.

The protein localises to the membrane. In Mus musculus (Mouse), this protein is Uroplakin-3b-like protein 1.